The chain runs to 251 residues: Large ribosomal subunit protein uL3 (251 aa).

Disordered stretches follow at residues 140–162 and 229–251; these read SHRSIGSTGGRQDPGKTFKNKKM and AAPAGAVQAAQAAPEAPAAEENA. At Q151 the chain carries N5-methylglutamine.

Belongs to the universal ribosomal protein uL3 family. As to quaternary structure, part of the 50S ribosomal subunit. Forms a cluster with proteins L14 and L19. Methylated by PrmB.

In terms of biological role, one of the primary rRNA binding proteins, it binds directly near the 3'-end of the 23S rRNA, where it nucleates assembly of the 50S subunit. The protein is Large ribosomal subunit protein uL3 of Methylobacterium nodulans (strain LMG 21967 / CNCM I-2342 / ORS 2060).